The sequence spans 205 residues: Holliday junction branch migration complex subunit RuvA (205 aa).

The tract at residues 1–64 (MIGKLKGVID…EDQIKLFGFR (64 aa)) is domain I. The segment at 65–143 (TDHEREWFRL…SFANVDPTVV (79 aa)) is domain II. The segment at 144–154 (HLAGDLDDQRA) is flexible linker. Residues 154 to 205 (APRPVRDAISALVNLGYGQPQATAAIAAASRGAGENAETAQLIRLGLKELSK) are domain III.

Belongs to the RuvA family. As to quaternary structure, homotetramer. Forms an RuvA(8)-RuvB(12)-Holliday junction (HJ) complex. HJ DNA is sandwiched between 2 RuvA tetramers; dsDNA enters through RuvA and exits via RuvB. An RuvB hexamer assembles on each DNA strand where it exits the tetramer. Each RuvB hexamer is contacted by two RuvA subunits (via domain III) on 2 adjacent RuvB subunits; this complex drives branch migration. In the full resolvosome a probable DNA-RuvA(4)-RuvB(12)-RuvC(2) complex forms which resolves the HJ.

It is found in the cytoplasm. In terms of biological role, the RuvA-RuvB-RuvC complex processes Holliday junction (HJ) DNA during genetic recombination and DNA repair, while the RuvA-RuvB complex plays an important role in the rescue of blocked DNA replication forks via replication fork reversal (RFR). RuvA specifically binds to HJ cruciform DNA, conferring on it an open structure. The RuvB hexamer acts as an ATP-dependent pump, pulling dsDNA into and through the RuvAB complex. HJ branch migration allows RuvC to scan DNA until it finds its consensus sequence, where it cleaves and resolves the cruciform DNA. The sequence is that of Holliday junction branch migration complex subunit RuvA from Nitrobacter winogradskyi (strain ATCC 25391 / DSM 10237 / CIP 104748 / NCIMB 11846 / Nb-255).